The chain runs to 120 residues: Large ribosomal subunit protein bL19 (120 aa).

Belongs to the bacterial ribosomal protein bL19 family.

Functionally, this protein is located at the 30S-50S ribosomal subunit interface and may play a role in the structure and function of the aminoacyl-tRNA binding site. The sequence is that of Large ribosomal subunit protein bL19 from Rippkaea orientalis (strain PCC 8801 / RF-1) (Cyanothece sp. (strain PCC 8801)).